The chain runs to 739 residues: MPNMEPTTKEIKEQKIYQEMGLTDSEYELVCSILGREPNYTETGLFSVMWSEHCSYKNSKPVLRKFPTEGKQVLQGPGEGAGIVDIGDGLGVAFKVESHNHPSYVEPYQGAATGVGGIIRDVFSMGARPIAMLNSLRFGELDTPHSKYLVSEVVAGIAGYGNSIGIPTVGGEIQFDPCYTKNPLVNAMCVGLIEAKDIQKGQAKGIGNPVMYVGAKTGRDGIHGATFASVEFSEEGEQQRSAVQVGDPFMEKLLLEACLDVIRDHSDILVGIQDMGAAGLVSSSSEMASKAGAGLELIMDDVPQRELNMTPYEMLLSESQERMLLCVKKGHVDEIQALFDRYGLEAVVIGKVTDDKMYKIIHHGEVVANVPVDALAEDAPVYHKPSTEPARYQAFQEEQPFVPVMEDVVEVWKELLAQPTIASKRHIYEQYDYQVRTDTAVVPGSDAAIVRVRGTEKAIAMTTDCNSRYLYLDPEVGGAIAVAEAARNIVCSGGKPLAITDGLNFGNPEKPEIFWEIEKAADGISAACLELDTPVISGNVSLYNETDGTGIYPTPVIGMVGLVEDLAHITTQDFKNSGDVIFLIGETKAEYNGSELQKLQQGKISGRAPELDLTTEKKYQELLLTAIREGLVSSSHDLAEGGFGVALAEATFKAGLGADVEVPFALNQLFSESQSRFLVSVKPENEAVFAKIMEQEKVYRLGVVTADETIRVKYKEEEVTASTTDLRSIWEGAIPCLLK.

Residue His53 is part of the active site. Residues Tyr56 and Lys95 each contribute to the ATP site. Glu97 is a Mg(2+) binding site. Substrate contacts are provided by residues 98–101 and Arg120; that span reads SHNH. The active-site Proton acceptor is His99. Residue Asp121 participates in Mg(2+) binding. Gln244 provides a ligand contact to substrate. Residue Asp274 participates in Mg(2+) binding. 318 to 320 lines the substrate pocket; that stretch reads ESQ. Asp501 and Gly538 together coordinate ATP. Asn539 serves as a coordination point for Mg(2+). Ser541 serves as a coordination point for substrate.

Belongs to the FGAMS family. As to quaternary structure, monomer. Part of the FGAM synthase complex composed of 1 PurL, 1 PurQ and 2 PurS subunits.

Its subcellular location is the cytoplasm. The enzyme catalyses N(2)-formyl-N(1)-(5-phospho-beta-D-ribosyl)glycinamide + L-glutamine + ATP + H2O = 2-formamido-N(1)-(5-O-phospho-beta-D-ribosyl)acetamidine + L-glutamate + ADP + phosphate + H(+). It participates in purine metabolism; IMP biosynthesis via de novo pathway; 5-amino-1-(5-phospho-D-ribosyl)imidazole from N(2)-formyl-N(1)-(5-phospho-D-ribosyl)glycinamide: step 1/2. Functionally, part of the phosphoribosylformylglycinamidine synthase complex involved in the purines biosynthetic pathway. Catalyzes the ATP-dependent conversion of formylglycinamide ribonucleotide (FGAR) and glutamine to yield formylglycinamidine ribonucleotide (FGAM) and glutamate. The FGAM synthase complex is composed of three subunits. PurQ produces an ammonia molecule by converting glutamine to glutamate. PurL transfers the ammonia molecule to FGAR to form FGAM in an ATP-dependent manner. PurS interacts with PurQ and PurL and is thought to assist in the transfer of the ammonia molecule from PurQ to PurL. This is Phosphoribosylformylglycinamidine synthase subunit PurL from Listeria welshimeri serovar 6b (strain ATCC 35897 / DSM 20650 / CCUG 15529 / CIP 8149 / NCTC 11857 / SLCC 5334 / V8).